Reading from the N-terminus, the 58-residue chain is Large ribosomal subunit protein uL30 (58 aa).

This sequence belongs to the universal ribosomal protein uL30 family. Part of the 50S ribosomal subunit.

The polypeptide is Large ribosomal subunit protein uL30 (Psychromonas ingrahamii (strain DSM 17664 / CCUG 51855 / 37)).